A 429-amino-acid polypeptide reads, in one-letter code: Cleavage stimulation factor subunit 50 (429 aa).

The hydrophobic stretch occupies residues 20–41 (LNALIVAHLRHHNLSQVASAVA). 7 WD repeats span residues 121-160 (EHKSVVRCARFSPDGMFFATGGADTSIKLFEVPKVKQMIS), 174-213 (DHAEPINDLDFHPRSTILISSAKDNCIKFFDFSKTTAKRA), 218-257 (QDTHNVRSISFHPSGEFLLAGTDHPIPHLYDVNTYQCFLP), 264-303 (GVSGAINQVRYSSTGSIYITASKDGAIRLFDGVSAKCVRS), 308-347 (HGKSEVTSAVFTKDQRFVLSSGKDSTVKLWEIGSGRMVKE), 351-392 (AKRV…KVAK), and 396-429 (NHNGAPRWIEHSPVESVFVTCGIDRSIRFWKESV).

Homodimer. Belongs to the CSTF complex. Forms a complex with cleavage and polyadenylation specificity factor (CPSF) subunits CSTF64, PABN3, CPSF30, FIPS5 and CPSF100.

It is found in the nucleus. Its function is as follows. One of the multiple factors required for polyadenylation and 3'-end cleavage of pre-mRNAs. May be responsible for the interaction of CSTF with other factors to form a stable complex on the pre-mRNA. This chain is Cleavage stimulation factor subunit 50, found in Arabidopsis thaliana (Mouse-ear cress).